Reading from the N-terminus, the 225-residue chain is ATP-dependent dethiobiotin synthetase BioD (225 aa).

Residue 12–17 coordinates ATP; sequence GVGKTV. A Mg(2+)-binding site is contributed by Thr16. The active site involves Lys37. Thr41 is a binding site for substrate. Residues Asp46, 105-108, 166-167, and 196-198 contribute to the ATP site; these read EGAG, GS, and PEG. Mg(2+) contacts are provided by Asp46 and Glu105.

The protein belongs to the dethiobiotin synthetase family. As to quaternary structure, homodimer. It depends on Mg(2+) as a cofactor.

Its subcellular location is the cytoplasm. It catalyses the reaction (7R,8S)-7,8-diammoniononanoate + CO2 + ATP = (4R,5S)-dethiobiotin + ADP + phosphate + 3 H(+). It functions in the pathway cofactor biosynthesis; biotin biosynthesis; biotin from 7,8-diaminononanoate: step 1/2. In terms of biological role, catalyzes a mechanistically unusual reaction, the ATP-dependent insertion of CO2 between the N7 and N8 nitrogen atoms of 7,8-diaminopelargonic acid (DAPA, also called 7,8-diammoniononanoate) to form a ureido ring. The polypeptide is ATP-dependent dethiobiotin synthetase BioD (Mycobacteroides abscessus (strain ATCC 19977 / DSM 44196 / CCUG 20993 / CIP 104536 / JCM 13569 / NCTC 13031 / TMC 1543 / L948) (Mycobacterium abscessus)).